Reading from the N-terminus, the 445-residue chain is MADSTADESTNADTLWRELHKVLPEIWYDGGGKDHCEIDEAIRILTCLRKIESKNPESDISPVEVPKEFICTLSNKIMIEPMLIASGQTFEKSYILEWLKHERTCPRTKQVLYHRFMIPNHLINEVIKEWCLIHNFDRPKTSDEVIDLFTGDLESLLQRISSPSSVEDQTEAAKELALKAKRFSSVCVYFVAKIPDSITRLLTPLSISEDSNPEFLENIVTALHIFSTSEKNKTLVAENPLVLPLLAKYMKQGTVLTRIHSAATVNSLSYTDSNKIIIGNSEVLKALIHVIEEGDSLATSEAFSALSNLCPVKEISEKAVSEGLIRAAIKKIKAGSNVSMLLSLLAFVSTQNHQTTEEMDNLGLIYDLFSILRNSNSLVNDENAVVIVYNICKSYKALQNVVLREEKRDVVLEEENKHGTFTRLENQEAGRATSLAKRILEWILR.

A U-box domain is found at Glu-64–Asp-137.

The enzyme catalyses S-ubiquitinyl-[E2 ubiquitin-conjugating enzyme]-L-cysteine + [acceptor protein]-L-lysine = [E2 ubiquitin-conjugating enzyme]-L-cysteine + N(6)-ubiquitinyl-[acceptor protein]-L-lysine.. Its pathway is protein modification; protein ubiquitination. In terms of biological role, functions as an E3 ubiquitin ligase. The polypeptide is Putative U-box domain-containing protein 47 (PUB47) (Arabidopsis thaliana (Mouse-ear cress)).